We begin with the raw amino-acid sequence, 325 residues long: Hydroxymethylglutaryl-CoA lyase, mitochondrial (325 aa).

The N-terminal 27 residues, methionine 1–glycine 27, are a transit peptide targeting the mitochondrion. The Pyruvate carboxyltransferase domain occupies valine 33–leucine 300. Arginine 41 serves as a coordination point for substrate. Aspartate 42 is an a divalent metal cation binding site. Lysine 48 carries the post-translational modification N6-acetyllysine; alternate. The residue at position 48 (lysine 48) is an N6-succinyllysine; alternate. Lysine 111 bears the N6-acetyllysine mark. Lysine 137 and lysine 179 each carry N6-acetyllysine; alternate. 2 positions are modified to N6-succinyllysine; alternate: lysine 137 and lysine 179. 2 residues coordinate a divalent metal cation: histidine 233 and histidine 235. Residue cysteine 266 is part of the active site. Asparagine 275 contacts a divalent metal cation. Positions cysteine 323 to leucine 325 match the Microbody targeting signal motif. Lysine 324 carries the N6-acetyllysine modification.

The protein belongs to the HMG-CoA lyase family. In terms of assembly, homodimer; disulfide-linked. Can also form homotetramers. In suckling rat, highest levels in liver and in intestine. Lower levels in heart, kidney and cerebellum. Weak expression in brain cortex, medulla and midbrain. Levels decrease slightly during weaning.

The protein resides in the mitochondrion matrix. It localises to the peroxisome. It catalyses the reaction (3S)-3-hydroxy-3-methylglutaryl-CoA = acetoacetate + acetyl-CoA. Its pathway is metabolic intermediate metabolism; (S)-3-hydroxy-3-methylglutaryl-CoA degradation; acetoacetate from (S)-3-hydroxy-3-methylglutaryl-CoA: step 1/1. Mitochondrial 3-hydroxy-3-methylglutaryl-CoA lyase that catalyzes a cation-dependent cleavage of (S)-3-hydroxy-3-methylglutaryl-CoA into acetyl-CoA and acetoacetate, a key step in ketogenesis. Terminal step in leucine catabolism. Ketone bodies (beta-hydroxybutyrate, acetoacetate and acetone) are essential as an alternative source of energy to glucose, as lipid precursors and as regulators of metabolism. This chain is Hydroxymethylglutaryl-CoA lyase, mitochondrial (Hmgcl), found in Rattus norvegicus (Rat).